We begin with the raw amino-acid sequence, 166 residues long: Succinate dehydrogenase assembly factor 2, mitochondrial (166 aa).

A mitochondrion-targeting transit peptide spans 1–29 (MAVVAVFPALARMLAVSRRRLVSPSLSMT).

Belongs to the SDHAF2 family. Interacts with SDHA within the SDH catalytic dimer.

It is found in the mitochondrion matrix. Plays an essential role in the assembly of succinate dehydrogenase (SDH), an enzyme complex (also referred to as respiratory complex II) that is a component of both the tricarboxylic acid (TCA) cycle and the mitochondrial electron transport chain, and which couples the oxidation of succinate to fumarate with the reduction of ubiquinone (coenzyme Q) to ubiquinol. Required for flavinylation (covalent attachment of FAD) of the flavoprotein subunit SDHA of the SDH catalytic dimer. In Bos taurus (Bovine), this protein is Succinate dehydrogenase assembly factor 2, mitochondrial.